The following is a 223-amino-acid chain: Phosphoribosylformylglycinamidine synthase subunit PurQ (223 aa).

The Glutamine amidotransferase type-1 domain maps to lysine 2–phenylalanine 223. The active-site Nucleophile is cysteine 84. Active-site residues include histidine 192 and glutamate 194.

In terms of assembly, part of the FGAM synthase complex composed of 1 PurL, 1 PurQ and 2 PurS subunits.

Its subcellular location is the cytoplasm. It carries out the reaction N(2)-formyl-N(1)-(5-phospho-beta-D-ribosyl)glycinamide + L-glutamine + ATP + H2O = 2-formamido-N(1)-(5-O-phospho-beta-D-ribosyl)acetamidine + L-glutamate + ADP + phosphate + H(+). The catalysed reaction is L-glutamine + H2O = L-glutamate + NH4(+). The protein operates within purine metabolism; IMP biosynthesis via de novo pathway; 5-amino-1-(5-phospho-D-ribosyl)imidazole from N(2)-formyl-N(1)-(5-phospho-D-ribosyl)glycinamide: step 1/2. Its function is as follows. Part of the phosphoribosylformylglycinamidine synthase complex involved in the purines biosynthetic pathway. Catalyzes the ATP-dependent conversion of formylglycinamide ribonucleotide (FGAR) and glutamine to yield formylglycinamidine ribonucleotide (FGAM) and glutamate. The FGAM synthase complex is composed of three subunits. PurQ produces an ammonia molecule by converting glutamine to glutamate. PurL transfers the ammonia molecule to FGAR to form FGAM in an ATP-dependent manner. PurS interacts with PurQ and PurL and is thought to assist in the transfer of the ammonia molecule from PurQ to PurL. The polypeptide is Phosphoribosylformylglycinamidine synthase subunit PurQ (Campylobacter jejuni subsp. jejuni serotype O:2 (strain ATCC 700819 / NCTC 11168)).